A 127-amino-acid chain; its full sequence is Large ribosomal subunit protein bL17 (127 aa).

Belongs to the bacterial ribosomal protein bL17 family. As to quaternary structure, part of the 50S ribosomal subunit. Contacts protein L32.

The protein is Large ribosomal subunit protein bL17 of Lactobacillus delbrueckii subsp. bulgaricus (strain ATCC 11842 / DSM 20081 / BCRC 10696 / JCM 1002 / NBRC 13953 / NCIMB 11778 / NCTC 12712 / WDCM 00102 / Lb 14).